A 568-amino-acid polypeptide reads, in one-letter code: Oxygen-dependent choline dehydrogenase (568 aa).

Residue 6–35 (DYIIVGAGSAGCVLADRLSASGEHYILLLE) coordinates FAD. H470 serves as the catalytic Proton acceptor.

This sequence belongs to the GMC oxidoreductase family. It depends on FAD as a cofactor.

The enzyme catalyses choline + A = betaine aldehyde + AH2. The catalysed reaction is betaine aldehyde + NAD(+) + H2O = glycine betaine + NADH + 2 H(+). It functions in the pathway amine and polyamine biosynthesis; betaine biosynthesis via choline pathway; betaine aldehyde from choline (cytochrome c reductase route): step 1/1. Functionally, involved in the biosynthesis of the osmoprotectant glycine betaine. Catalyzes the oxidation of choline to betaine aldehyde and betaine aldehyde to glycine betaine at the same rate. This Photobacterium profundum (strain SS9) protein is Oxygen-dependent choline dehydrogenase.